A 233-amino-acid polypeptide reads, in one-letter code: Glutathione S-transferase U15 (233 aa).

One can recognise a GST N-terminal domain in the interval 5 to 85 (EEVKLLGTWY…YIDETWNSSG (81 aa)). Glutathione contacts are provided by residues 15 to 16 (SP), 42 to 43 (SK), 56 to 57 (KV), and 69 to 70 (VS). Residues 92 to 219 (HPYDRALARF…VPDIDKVAKF (128 aa)) enclose the GST C-terminal domain. At Thr158 the chain carries Phosphothreonine.

Belongs to the GST superfamily. Tau family.

The protein resides in the cytoplasm. The protein localises to the cytosol. It catalyses the reaction RX + glutathione = an S-substituted glutathione + a halide anion + H(+). Functionally, may be involved in the conjugation of reduced glutathione to a wide number of exogenous and endogenous hydrophobic electrophiles and have a detoxification role against certain herbicides. The protein is Glutathione S-transferase U15 (GSTU15) of Arabidopsis thaliana (Mouse-ear cress).